Reading from the N-terminus, the 237-residue chain is Protein GrpE (237 aa).

Disordered regions lie at residues methionine 1 to glutamine 52 and lysine 200 to valine 237. Positions alanine 27 to serine 40 are enriched in polar residues. The span at glycine 204–proline 218 shows a compositional bias: low complexity.

This sequence belongs to the GrpE family. As to quaternary structure, homodimer.

The protein resides in the cytoplasm. Functionally, participates actively in the response to hyperosmotic and heat shock by preventing the aggregation of stress-denatured proteins, in association with DnaK and GrpE. It is the nucleotide exchange factor for DnaK and may function as a thermosensor. Unfolded proteins bind initially to DnaJ; upon interaction with the DnaJ-bound protein, DnaK hydrolyzes its bound ATP, resulting in the formation of a stable complex. GrpE releases ADP from DnaK; ATP binding to DnaK triggers the release of the substrate protein, thus completing the reaction cycle. Several rounds of ATP-dependent interactions between DnaJ, DnaK and GrpE are required for fully efficient folding. The sequence is that of Protein GrpE from Prochlorococcus marinus (strain MIT 9313).